An 880-amino-acid polypeptide reads, in one-letter code: Translation initiation factor IF-2 (880 aa).

7 stretches are compositionally biased toward basic and acidic residues: residues 34–43 (HMSSLDDKQV), 59–69 (TEKDSKNSSRK), 82–94 (RRRD…DNRH), 110–131 (NRRE…DLLN), 167–181 (KKVE…EKLE), 230–240 (QKEETKPTRKK), and 248–261 (EVPD…EHSD). The interval 34 to 297 (HMSSLDDKQV…KERPLPETLV (264 aa)) is disordered. The span at 262-275 (KARRRRNKKNKRIN) shows a compositional bias: basic residues. Residues 276-292 (QSKEVKKQPTQRKERPL) show a composition bias toward basic and acidic residues. In terms of domain architecture, tr-type G spans 381 to 550 (KRPPVVTIMG…LLQADVMELK (170 aa)). A G1 region spans residues 390 to 397 (GHVDHGKT). 390–397 (GHVDHGKT) is a GTP binding site. Residues 415-419 (GITQR) are G2. Residues 436–439 (DTPG) are G3. GTP contacts are provided by residues 436–440 (DTPGH) and 490–493 (NKID). Residues 490–493 (NKID) form a G4 region. The interval 526–528 (SAK) is G5.

It belongs to the TRAFAC class translation factor GTPase superfamily. Classic translation factor GTPase family. IF-2 subfamily.

It is found in the cytoplasm. Functionally, one of the essential components for the initiation of protein synthesis. Protects formylmethionyl-tRNA from spontaneous hydrolysis and promotes its binding to the 30S ribosomal subunits. Also involved in the hydrolysis of GTP during the formation of the 70S ribosomal complex. This is Translation initiation factor IF-2 from Lactobacillus johnsonii (strain CNCM I-12250 / La1 / NCC 533).